Reading from the N-terminus, the 290-residue chain is Arylamine N-acetyltransferase 1 (290 aa).

Methionine 1 bears the N-acetylmethionine mark. Residue cysteine 68 is the Acyl-thioester intermediate of the active site. Residues threonine 103 and glycine 104 each contribute to the CoA site. Residue 106-107 (IH) participates in substrate binding. Active-site residues include histidine 107 and aspartate 122. Residues tyrosine 208 and serine 214 each contribute to the CoA site.

Belongs to the arylamine N-acetyltransferase family.

It localises to the cytoplasm. The enzyme catalyses an arylamine + acetyl-CoA = an N-acetylarylamine + CoA. Its function is as follows. Participates in the detoxification of a plethora of hydrazine and arylamine drugs. Catalyzes the N- or O-acetylation of various arylamine and heterocyclic amine substrates and is able to bioactivate several known carcinogens. This is Arylamine N-acetyltransferase 1 (NAT1) from Homo sapiens (Human).